A 475-amino-acid chain; its full sequence is Beta-amyrin 16-alpha-hydroxylase CYP87D16 (475 aa).

The helical transmembrane segment at 3–23 (VVGLIGVAVVTILITQYVYKW) threads the bilayer. Cysteine 423 contributes to the heme binding site.

This sequence belongs to the cytochrome P450 family. It depends on heme as a cofactor.

It is found in the membrane. The catalysed reaction is beta-amyrin + reduced [NADPH--hemoprotein reductase] + O2 = 16alpha-hydroxy-beta-amyrin + oxidized [NADPH--hemoprotein reductase] + H2O + H(+). Its function is as follows. Involved in the biosynthetic pathway of maesasaponins, which are oleanane-type saponins with diverse biological activities. Catalyzes the C-16alpha oxidation of beta-amyrin to form 16alpha-hydroxy-beta-amyrin. The protein is Beta-amyrin 16-alpha-hydroxylase CYP87D16 of Maesa lanceolata (False assegai).